We begin with the raw amino-acid sequence, 1009 residues long: Type VII secretion system accessory factor EsaA (1009 aa).

A helical membrane pass occupies residues 7-27; it reads IYALIVTLIIIIAIVSMIFFV. The segment covering 680 to 697 has biased composition (basic and acidic residues); it reads TFAEEPQEPKIDKGKNDE. The interval 680–707 is disordered; the sequence is TFAEEPQEPKIDKGKNDEFNTMSSNLDK. 5 helical membrane-spanning segments follow: residues 822–842, 869–889, 903–923, 928–948, and 979–999; these read ISPT…AYIF, VITS…VGLI, KFIL…TYLL, SIGM…MNNL, and IGLV…LNMF.

Belongs to the EsaA family. As to quaternary structure, homodimer. Interacts with EssB.

It is found in the cell membrane. Functionally, component of the type VII secretion system (Ess). Provides together with EssB and other components such as EssC and EssE a secretion plateform accross the cytoplasmic membrane in the host. The protein is Type VII secretion system accessory factor EsaA of Staphylococcus aureus (strain USA300).